A 390-amino-acid chain; its full sequence is Chorismate synthase 2 (390 aa).

Residues R39 and R45 each contribute to the NADP(+) site. FMN is bound by residues 132 to 134 (RSS), 253 to 254 (NA), G298, 313 to 317 (KPIPT), and R339.

This sequence belongs to the chorismate synthase family. Homotetramer. It depends on FMNH2 as a cofactor.

It catalyses the reaction 5-O-(1-carboxyvinyl)-3-phosphoshikimate = chorismate + phosphate. Its pathway is metabolic intermediate biosynthesis; chorismate biosynthesis; chorismate from D-erythrose 4-phosphate and phosphoenolpyruvate: step 7/7. Its function is as follows. Catalyzes the anti-1,4-elimination of the C-3 phosphate and the C-6 proR hydrogen from 5-enolpyruvylshikimate-3-phosphate (EPSP) to yield chorismate, which is the branch point compound that serves as the starting substrate for the three terminal pathways of aromatic amino acid biosynthesis. This reaction introduces a second double bond into the aromatic ring system. This is Chorismate synthase 2 from Bacillus thuringiensis (strain Al Hakam).